The chain runs to 305 residues: tRNA dimethylallyltransferase 1 (305 aa).

10-17 (GPTASGKT) serves as a coordination point for ATP. 12–17 (TASGKT) contributes to the substrate binding site. Residues 35 to 38 (DSRQ) are interaction with substrate tRNA.

Belongs to the IPP transferase family. Monomer. The cofactor is Mg(2+).

It carries out the reaction adenosine(37) in tRNA + dimethylallyl diphosphate = N(6)-dimethylallyladenosine(37) in tRNA + diphosphate. Its function is as follows. Catalyzes the transfer of a dimethylallyl group onto the adenine at position 37 in tRNAs that read codons beginning with uridine, leading to the formation of N6-(dimethylallyl)adenosine (i(6)A). This chain is tRNA dimethylallyltransferase 1, found in Syntrophus aciditrophicus (strain SB).